The primary structure comprises 41 residues: Conotoxin Bu22 (41 aa).

Residues 1-25 constitute a propeptide that is removed on maturation; that stretch reads SDRASDGRNAAANDRASDLVALTVR. Disulfide bonds link C27-C33 and C28-C40.

Belongs to the conotoxin A superfamily. Expressed by the venom duct.

Its subcellular location is the secreted. The polypeptide is Conotoxin Bu22 (Conus bullatus (Bubble cone)).